The chain runs to 478 residues: MTLSFVTRWRDELPETYTALSPTPLNNARLIWHNTELANTLSIPSSLFKNGAGVWGGEALLPGMSPLAQVYSGHQFGVWAGQLGDGRGILLGEQLLADGTTMDWHLKGAGLTPYSRMGDGRAVLRSTIRESLASEAMHYLGIPTTRALSIVTSDSPVYRETAEPGAMLMRVAPSHLRFGHFEHFYYRRESEKVRQLADFAIRHYWSHLEDDEDKYRLWFSDVVARTASLIAQWQTVGFAHGVMNTDNMSLLGLTLDYGPFGFLDDYEPGFICNHSDHQGRYSFDNQPAVALWNLQRLAQTLSPFVAVDALNEALDSYQQVLLTHYGQRMRQKLGFMTEQKEDNALLNELFSLMARERSDYTRTFRMLSLTEQHSAASPLRDEFIDRAAFDDWFARYRGRLQQDEVSDSERQQLMQSVNPALVLRNWLAQRAIEAAEKGDMMELHRLHEALRNPFSDRDDDYVSRPPDWGKRLEVSCSS.

Residues G84, G86, R87, K107, D119, G120, R170, and R177 each contribute to the ATP site. D246 acts as the Proton acceptor in catalysis. Mg(2+) contacts are provided by N247 and D256. An ATP-binding site is contributed by D256.

Belongs to the SELO family. Mg(2+) is required as a cofactor. Mn(2+) serves as cofactor.

The enzyme catalyses L-seryl-[protein] + ATP = 3-O-(5'-adenylyl)-L-seryl-[protein] + diphosphate. The catalysed reaction is L-threonyl-[protein] + ATP = 3-O-(5'-adenylyl)-L-threonyl-[protein] + diphosphate. It carries out the reaction L-tyrosyl-[protein] + ATP = O-(5'-adenylyl)-L-tyrosyl-[protein] + diphosphate. It catalyses the reaction L-histidyl-[protein] + UTP = N(tele)-(5'-uridylyl)-L-histidyl-[protein] + diphosphate. The enzyme catalyses L-seryl-[protein] + UTP = O-(5'-uridylyl)-L-seryl-[protein] + diphosphate. The catalysed reaction is L-tyrosyl-[protein] + UTP = O-(5'-uridylyl)-L-tyrosyl-[protein] + diphosphate. Functionally, nucleotidyltransferase involved in the post-translational modification of proteins. It can catalyze the addition of adenosine monophosphate (AMP) or uridine monophosphate (UMP) to a protein, resulting in modifications known as AMPylation and UMPylation. In Escherichia coli (strain ATCC 8739 / DSM 1576 / NBRC 3972 / NCIMB 8545 / WDCM 00012 / Crooks), this protein is Protein nucleotidyltransferase YdiU.